Reading from the N-terminus, the 157-residue chain is Phosphopantetheine adenylyltransferase (157 aa).

A substrate-binding site is contributed by serine 8. ATP contacts are provided by residues 8–9 (SF) and histidine 16. Substrate contacts are provided by lysine 40, threonine 72, and arginine 86. Residues 87–89 (GLR), glutamate 97, and 122–128 (YSFLSSS) each bind ATP.

It belongs to the bacterial CoaD family. Homohexamer. Mg(2+) serves as cofactor.

The protein localises to the cytoplasm. It carries out the reaction (R)-4'-phosphopantetheine + ATP + H(+) = 3'-dephospho-CoA + diphosphate. The protein operates within cofactor biosynthesis; coenzyme A biosynthesis; CoA from (R)-pantothenate: step 4/5. Reversibly transfers an adenylyl group from ATP to 4'-phosphopantetheine, yielding dephospho-CoA (dPCoA) and pyrophosphate. The sequence is that of Phosphopantetheine adenylyltransferase from Crocosphaera subtropica (strain ATCC 51142 / BH68) (Cyanothece sp. (strain ATCC 51142)).